We begin with the raw amino-acid sequence, 119 residues long: Large ribosomal subunit protein bL20 (119 aa).

This sequence belongs to the bacterial ribosomal protein bL20 family.

In terms of biological role, binds directly to 23S ribosomal RNA and is necessary for the in vitro assembly process of the 50S ribosomal subunit. It is not involved in the protein synthesizing functions of that subunit. In Xanthomonas oryzae pv. oryzae (strain KACC10331 / KXO85), this protein is Large ribosomal subunit protein bL20.